We begin with the raw amino-acid sequence, 226 residues long: Leucyl/phenylalanyl-tRNA--protein transferase (226 aa).

This sequence belongs to the L/F-transferase family.

It localises to the cytoplasm. It catalyses the reaction N-terminal L-lysyl-[protein] + L-leucyl-tRNA(Leu) = N-terminal L-leucyl-L-lysyl-[protein] + tRNA(Leu) + H(+). The catalysed reaction is N-terminal L-arginyl-[protein] + L-leucyl-tRNA(Leu) = N-terminal L-leucyl-L-arginyl-[protein] + tRNA(Leu) + H(+). The enzyme catalyses L-phenylalanyl-tRNA(Phe) + an N-terminal L-alpha-aminoacyl-[protein] = an N-terminal L-phenylalanyl-L-alpha-aminoacyl-[protein] + tRNA(Phe). Functionally, functions in the N-end rule pathway of protein degradation where it conjugates Leu, Phe and, less efficiently, Met from aminoacyl-tRNAs to the N-termini of proteins containing an N-terminal arginine or lysine. This Salinibacter ruber (strain DSM 13855 / M31) protein is Leucyl/phenylalanyl-tRNA--protein transferase.